The chain runs to 441 residues: MEYTPSPKPQLSSRANAFSIAALMSSGTPKDKEAQESTIKPLEQFVEKSSCSQPIGDISIVDSHGEFTNSPSSLCTEPLIPTTPIIPSEEMAKISCSLETKELWDKFHDLGTEMIITKSGRRMFPTIRVSFSGVDADAKYIVLMDIVPVDNKRYRYAYHRSAWLVAGKADPPLPARLYVHPDSPFTGEQLLKQMVSFEKVKLTNNELDQHGHIILNSMHKYQPRVHIIKKKDHTASLLNLKSEEFRTFIFQETVFTAVTAYQNQLITKLKIDSNPFAKGFRDSSRLTDIERESVESLIQKHSYARSPIRTYGGDEDVLSEDGQVVQCRGSAFTTSDNLSLSSWVSSTSGFSGFQHPQSLTALGTSTASLATPIPHPIQGSLPPYSRLGMPLTPSALASSMQGSGPTFPSFHMPRYHHYFQQGPYAAIQGLRHSSTVMTPFV.

A DNA-binding region (T-box) is located at residues 103–282 (LWDKFHDLGT…SNPFAKGFRD (180 aa)).

Expressed throughout all cardiac tissue during later stages of development. Also expressed in the cement gland, jugular vein, lung bud, cloacal aperture, rhombomeres 2, 4, 6 and 8 and in a subset of motor neurons.

The protein resides in the nucleus. Transcriptional regulator that may be involved in heart developmental processes. The protein is T-box transcription factor TBX20 (tbx20) of Xenopus laevis (African clawed frog).